The following is a 272-amino-acid chain: Protein STAY-GREEN 1, chloroplastic (272 aa).

A chloroplast-targeting transit peptide spans 1 to 50 (MGTLTTSLVVPSKLNNEQQSSIFIHKTRRKCKKNQSIVPVARLFGPAIFE). A disordered region spans residues 201-222 (TSPSSSSGGVGGVKSTSFTSNS).

This sequence belongs to the staygreen family. Interacts with PSY1.

The protein resides in the plastid. Its subcellular location is the chloroplast. In terms of biological role, required to trigger chlorophyll degradation during leaf senescence and fruit ripening. Binds directly PSY1 to regulate the accumulation of lycopene and beta-carotene in the maturing fruits. This chain is Protein STAY-GREEN 1, chloroplastic, found in Solanum lycopersicum (Tomato).